Consider the following 957-residue polypeptide: Glycine dehydrogenase (decarboxylating) (957 aa).

An N6-(pyridoxal phosphate)lysine modification is found at lysine 708.

It belongs to the GcvP family. As to quaternary structure, the glycine cleavage system is composed of four proteins: P, T, L and H. Requires pyridoxal 5'-phosphate as cofactor.

The enzyme catalyses N(6)-[(R)-lipoyl]-L-lysyl-[glycine-cleavage complex H protein] + glycine + H(+) = N(6)-[(R)-S(8)-aminomethyldihydrolipoyl]-L-lysyl-[glycine-cleavage complex H protein] + CO2. In terms of biological role, the glycine cleavage system catalyzes the degradation of glycine. The P protein binds the alpha-amino group of glycine through its pyridoxal phosphate cofactor; CO(2) is released and the remaining methylamine moiety is then transferred to the lipoamide cofactor of the H protein. This chain is Glycine dehydrogenase (decarboxylating), found in Shigella dysenteriae serotype 1 (strain Sd197).